Reading from the N-terminus, the 157-residue chain is SsrA-binding protein (157 aa).

This sequence belongs to the SmpB family.

Its subcellular location is the cytoplasm. Required for rescue of stalled ribosomes mediated by trans-translation. Binds to transfer-messenger RNA (tmRNA), required for stable association of tmRNA with ribosomes. tmRNA and SmpB together mimic tRNA shape, replacing the anticodon stem-loop with SmpB. tmRNA is encoded by the ssrA gene; the 2 termini fold to resemble tRNA(Ala) and it encodes a 'tag peptide', a short internal open reading frame. During trans-translation Ala-aminoacylated tmRNA acts like a tRNA, entering the A-site of stalled ribosomes, displacing the stalled mRNA. The ribosome then switches to translate the ORF on the tmRNA; the nascent peptide is terminated with the 'tag peptide' encoded by the tmRNA and targeted for degradation. The ribosome is freed to recommence translation, which seems to be the essential function of trans-translation. The sequence is that of SsrA-binding protein from Limosilactobacillus fermentum (strain NBRC 3956 / LMG 18251) (Lactobacillus fermentum).